The following is a 308-amino-acid chain: Aspartate carbamoyltransferase catalytic subunit (308 aa).

Carbamoyl phosphate is bound by residues arginine 55 and threonine 56. L-aspartate is bound at residue lysine 83. Carbamoyl phosphate-binding residues include arginine 105, histidine 133, and glutamine 136. Residues arginine 166 and arginine 220 each contribute to the L-aspartate site. Residues glycine 261 and proline 262 each contribute to the carbamoyl phosphate site.

Belongs to the aspartate/ornithine carbamoyltransferase superfamily. ATCase family. Heterododecamer (2C3:3R2) of six catalytic PyrB chains organized as two trimers (C3), and six regulatory PyrI chains organized as three dimers (R2).

The enzyme catalyses carbamoyl phosphate + L-aspartate = N-carbamoyl-L-aspartate + phosphate + H(+). It functions in the pathway pyrimidine metabolism; UMP biosynthesis via de novo pathway; (S)-dihydroorotate from bicarbonate: step 2/3. Catalyzes the condensation of carbamoyl phosphate and aspartate to form carbamoyl aspartate and inorganic phosphate, the committed step in the de novo pyrimidine nucleotide biosynthesis pathway. In Chlorobium phaeobacteroides (strain DSM 266 / SMG 266 / 2430), this protein is Aspartate carbamoyltransferase catalytic subunit.